Reading from the N-terminus, the 231-residue chain is Protein INCA1 (231 aa).

Residues 75–99 are interaction with CCNA1 and CCNA1/CDK2 complex; essential for CDK2 inhibitory activity; sequence SLHPLEGLPPPEKLWRRKRKKLHLE. The short motif at 90–95 is the Nuclear localization signal element; sequence RRKRKK. At Thr180 the chain carries Phosphothreonine.

This sequence belongs to the INCA family. In terms of assembly, interacts with CCNA1. Identified in a complex with CCNA1 and CDK2. Interacts with ZNF16; the interaction inhibits INCA1 activity and induces the cell cycle process. Interacts with SPACA9. Interacts with CCNA2, CCNB1 and CCNE1. Interacts with the CCNA1/CDK2 complex. Interacts with ING5, DAZAP2, RNF26, USP15, SPOUT1, DPH7, TRIM26 and RAB5C. In terms of processing, phosphorylated when part of a complex with CCNA1 and CDK2.

The protein resides in the nucleus. Its subcellular location is the cytoplasm. Its function is as follows. Binds to CDK2-bound cyclins and inhibits the kinase activity of CDK2; binding to cyclins is critical for its function as CDK inhibitor. Inhibits cell growth and proliferation and may play a role in cell cycle control. Required for ING5-mediated regulation of S-phase progression, enhancement of Fas-induced apoptosis and inhibition of cell growth. This chain is Protein INCA1 (Inca1), found in Mus musculus (Mouse).